The primary structure comprises 203 residues: Protein S40-6 (203 aa).

The tract at residues 1 to 33 (MAKGRKPTTMNRSDRYLGSYTYGDSHGNSVTDE) is disordered.

This sequence belongs to the senescence regulator S40 family.

The protein resides in the cytoplasm. The chain is Protein S40-6 from Arabidopsis thaliana (Mouse-ear cress).